A 747-amino-acid polypeptide reads, in one-letter code: Plakophilin-1 (747 aa).

A required for binding to single stranded DNA region spans residues 1–234; the sequence is MNHSPLKTAL…SFGHSRASSK (234 aa). Residues 1 to 286 form a required for interaction with EIF4A1 region; it reads MNHSPLKTAL…ESAKQQVYQL (286 aa). A Phosphoserine modification is found at Ser-4. Residues 48–68 are disordered; sequence TVKRQKSKSSQSSTLSHSNRG. Phosphorylation in this region is required for cytoplasmic localization and protein stabilization stretches follow at residues 54-69 and 116-191; these read SKSS…NRGS and RFSS…STCS. Ser-118 carries the post-translational modification Phosphoserine; by PKB/AKT2. Residues Ser-119, Ser-121, and Ser-142 each carry the phosphoserine modification. The required for WNT-mediated nuclear localization stretch occupies residues 160–269; that stretch reads YCDPRGTLRK…KYQAIGAYYI (110 aa). ARM repeat units follow at residues 243-274, 275-316, 317-359, 360-415, 416-463, 525-556, 557-603, 604-649, and 650-713; these read SGLT…HTCF, QDES…NLVF, RSTT…NLSS, TDEL…KRLG, MREL…NCVA, NYDC…LNLM, GKSK…IARL, LQSG…SHTG, and NTSN…DMWS.

Belongs to the beta-catenin family. Part of a complex that contains DSG3, PKP1, YAP1 and YWHAG; the complex is required for localization of DSG3 and YAP1 to the cell membrane in keratinocytes. Interacts with DSP. Interacts (via N-terminus) with KRT5/CK5, KRT8/CK8 (via rod domain), KRT15/CK15 and KRT18/CK18 (via rod domain) as part of intermediate filaments. Interacts with VIM (via rod domain). Interacts with DSP. Interacts with DES. Interacts with FXR1; the interaction may facilitate the binding of PKP1 to PKP2, PKP3 and DSP mRNA. Interacts (via N-terminus) with EIF4A1; the interaction promotes EIF4A1 recruitment to the cap-dependent translation complex and EIF4A1 ATPase activity. Interacts with TJP1/ZO-1; the interaction facilitates TJP1/ZO-1 localization to the plasma membrane. Interacts (when phosphorylated) with YWHAG; the interaction results in translocation of PKP1 to the cytoplasm and loss of intercellular adhesion in keratinocytes. Phosphorylated by AKT2; required for interaction with YWHAG and subsequent localization away from desmosomes to the cytoplasm. Phosphorylation of Ser-118 by AKT2 promotes PKP1-driven cap-dependent mRNA translation and decreases intercellular adhesion, phosphorylation is promoted by insulin. Phosphorylation by RIPK4 at the N-terminus is required for its role in differentiation of keratinocytes and DSG1 localization at cell junctions. Expressed in stratified squamous, complex, glandular duct and bladder epithelia (at protein level). In terms of tissue distribution, widely expressed (at protein level).

It localises to the cell junction. The protein resides in the desmosome. Its subcellular location is the nucleus. It is found in the cytoplasm. The protein localises to the perinuclear region. It localises to the cell membrane. The protein resides in the stress granule. Its function is as follows. A component of desmosome cell-cell junctions which are required for positive regulation of cellular adhesion. Plays a role in desmosome protein expression regulation and localization to the desmosomal plaque, thereby maintaining cell sheet integrity and anchorage of desmosomes to intermediate filaments. Required for localization of DSG3 and YAP1 to the cell membrane in keratinocytes in response to mechanical strain, via the formation of an interaction complex composed of DSG3, YAP1, PKP1 and YWHAG. Positively regulates differentiation of keratinocytes, potentially via promoting localization of DSG1 at desmosome cell junctions. Required for calcium-independent development and maturation of desmosome plaques specifically at lateral cell-cell contacts in differentiating keratinocytes. Plays a role in the maintenance of DSG3 protein abundance, DSG3 clustering and localization of these clusters to the cell membrane in keratinocytes. May also promote keratinocyte proliferation and morphogenesis during postnatal development. Required for tight junction inside-out transepidermal barrier function of the skin. Promotes Wnt-mediated proliferation and differentiation of ameloblasts, via facilitating TJP1/ZO-1 localization to tight junctions. Binds single-stranded DNA (ssDNA), and may thereby play a role in sensing DNA damage and promoting cell survival. Positively regulates cap-dependent translation and as a result cell proliferation, via recruitment of EIF4A1 to the initiation complex and promotion of EIF4A1 ATPase activity. Regulates the mRNA stability and protein abundance of desmosome components PKP2, PKP3, DSC2 and DSP, potentially via its interaction with FXR1. In Homo sapiens (Human), this protein is Plakophilin-1 (PKP1).